We begin with the raw amino-acid sequence, 194 residues long: Imidazoleglycerol-phosphate dehydratase (194 aa).

This sequence belongs to the imidazoleglycerol-phosphate dehydratase family.

The protein localises to the cytoplasm. The catalysed reaction is D-erythro-1-(imidazol-4-yl)glycerol 3-phosphate = 3-(imidazol-4-yl)-2-oxopropyl phosphate + H2O. It participates in amino-acid biosynthesis; L-histidine biosynthesis; L-histidine from 5-phospho-alpha-D-ribose 1-diphosphate: step 6/9. The sequence is that of Imidazoleglycerol-phosphate dehydratase from Bacillus cereus (strain AH187).